Consider the following 151-residue polypeptide: Ribosomal RNA large subunit methyltransferase H (151 aa).

S-adenosyl-L-methionine is bound by residues glycine 100 and 119–124 (LSKMTF).

This sequence belongs to the RNA methyltransferase RlmH family. Homodimer.

The protein resides in the cytoplasm. The enzyme catalyses pseudouridine(1915) in 23S rRNA + S-adenosyl-L-methionine = N(3)-methylpseudouridine(1915) in 23S rRNA + S-adenosyl-L-homocysteine + H(+). Specifically methylates the pseudouridine at position 1915 (m3Psi1915) in 23S rRNA. The sequence is that of Ribosomal RNA large subunit methyltransferase H from Thermotoga sp. (strain RQ2).